The chain runs to 151 residues: Zinc finger HIT domain-containing protein 3 (151 aa).

Positions 11, 14, 22, 25, 30, 34, 38, and 42 each coordinate Zn(2+). The HIT-type zinc finger occupies 11–42; that stretch reads CVVCLEKPKYRCPTCRVPYCSVPCFQKHKEQC. The segment covering 43–53 has biased composition (basic and acidic residues); it reads SSEARPVEKRR. Residues 43–81 form a disordered region; sequence SSEARPVEKRRAGPPVRSEESKDDDSSVADFLNSDEEED. Acidic residues predominate over residues 63-81; sequence SKDDDSSVADFLNSDEEED. Position 76 is a phosphoserine (serine 76).

As to quaternary structure, thyroid receptor interacting proteins (TRIPs) specifically interact with the ligand binding domain of the thyroid receptor (TR). Requires the presence of thyroid hormone for its interaction. Interacts with NUFIP1. Interacts (via HIT-type zinc finger) with the RUVBL1/RUVBL2 complex in the presence of ADP. In terms of tissue distribution, expressed in the cerebellum.

The protein resides in the cytoplasm. It is found in the nucleus. The protein is Zinc finger HIT domain-containing protein 3 (Znhit3) of Mus musculus (Mouse).